The chain runs to 288 residues: Homeobox protein Hox-B4a (288 aa).

Residues serine 10 to aspartate 136 form a disordered region. The span at cysteine 118 to serine 132 shows a compositional bias: polar residues. The short motif at valine 139 to lysine 144 is the Antp-type hexapeptide element. The segment at residues proline 160–histidine 219 is a DNA-binding region (homeobox).

The protein belongs to the Antp homeobox family. Deformed subfamily.

It localises to the nucleus. Functionally, sequence-specific transcription factor which is part of a developmental regulatory system that provides cells with specific positional identities on the anterior-posterior axis. This is Homeobox protein Hox-B4a (hoxb4a) from Takifugu rubripes (Japanese pufferfish).